Reading from the N-terminus, the 195-residue chain is Large ribosomal subunit protein uL5 (195 aa).

Residues 1–25 (MARVPPPALKKDKKEKKPPKDNSKN) are disordered.

Belongs to the universal ribosomal protein uL5 family. In terms of assembly, component of the large ribosomal subunit.

The protein resides in the nucleus. It localises to the cytoplasm. Its function is as follows. Component of the ribosome, a large ribonucleoprotein complex responsible for the synthesis of proteins in the cell. The small ribosomal subunit (SSU) binds messenger RNAs (mRNAs) and translates the encoded message by selecting cognate aminoacyl-transfer RNA (tRNA) molecules. The large subunit (LSU) contains the ribosomal catalytic site termed the peptidyl transferase center (PTC), which catalyzes the formation of peptide bonds, thereby polymerizing the amino acids delivered by tRNAs into a polypeptide chain. The nascent polypeptides leave the ribosome through a tunnel in the LSU and interact with protein factors that function in enzymatic processing, targeting, and the membrane insertion of nascent chains at the exit of the ribosomal tunnel. This chain is Large ribosomal subunit protein uL5 (RpL11), found in Spodoptera frugiperda (Fall armyworm).